The sequence spans 229 residues: Putative N-acetylmannosamine-6-phosphate 2-epimerase (229 aa).

It belongs to the NanE family.

It catalyses the reaction an N-acyl-D-glucosamine 6-phosphate = an N-acyl-D-mannosamine 6-phosphate. It functions in the pathway amino-sugar metabolism; N-acetylneuraminate degradation; D-fructose 6-phosphate from N-acetylneuraminate: step 3/5. Functionally, converts N-acetylmannosamine-6-phosphate (ManNAc-6-P) to N-acetylglucosamine-6-phosphate (GlcNAc-6-P). This Escherichia fergusonii (strain ATCC 35469 / DSM 13698 / CCUG 18766 / IAM 14443 / JCM 21226 / LMG 7866 / NBRC 102419 / NCTC 12128 / CDC 0568-73) protein is Putative N-acetylmannosamine-6-phosphate 2-epimerase.